A 102-amino-acid chain; its full sequence is Putative pterin-4-alpha-carbinolamine dehydratase (102 aa).

It belongs to the pterin-4-alpha-carbinolamine dehydratase family.

The enzyme catalyses (4aS,6R)-4a-hydroxy-L-erythro-5,6,7,8-tetrahydrobiopterin = (6R)-L-erythro-6,7-dihydrobiopterin + H2O. This Burkholderia lata (strain ATCC 17760 / DSM 23089 / LMG 22485 / NCIMB 9086 / R18194 / 383) protein is Putative pterin-4-alpha-carbinolamine dehydratase.